The chain runs to 115 residues: U3-lycotoxin-Ls1k (115 aa).

The N-terminal stretch at 1–20 is a signal peptide; it reads MKFVLLFGVLLVTLFSYSSA. Residues 21-44 constitute a propeptide that is removed on maturation; sequence EMFDDFDQADEDELLSLIEKEEAR. Intrachain disulfides connect cysteine 48/cysteine 63, cysteine 55/cysteine 72, cysteine 62/cysteine 87, and cysteine 74/cysteine 85.

The protein belongs to the neurotoxin 19 (CSTX) family. 01 subfamily. As to expression, expressed by the venom gland.

The protein resides in the secreted. The sequence is that of U3-lycotoxin-Ls1k from Lycosa singoriensis (Wolf spider).